The sequence spans 157 residues: MVKRVSKEEMDALERSCSQPFEEERFLIVSGTKWCGNNNIAANYSDLGFLEADKCCRDHDHCDHIASGETKYGLENKGLFTILNCDCDEAFDHCLKEISNNVTTDIRQKGGAENVWRFYFQWYNANCYRLYCKDEKSARDEACTNQYAVVKKNFTVQ.

Residues Trp34 and Gly36 each coordinate Ca(2+). 5 disulfide bridges follow: Cys35–Cys56, Cys55–Cys94, Cys62–Cys87, Cys85–Cys127, and Cys132–Cys143. An N-linked (GlcNAc...) asparagine glycan is attached at Asn43. Residue His59 is part of the active site. Position 60 (Asp60) interacts with Ca(2+). Asp88 is a catalytic residue. Asn101 is a glycosylation site (N-linked (GlcNAc...) asparagine). A propeptide spans 134 to 139 (DEKSAR) (removed in mature form). Asn153 carries an N-linked (GlcNAc...) asparagine glycan.

This sequence belongs to the phospholipase A2 family. Group III subfamily. As to quaternary structure, heterodimer composed of a small subunit and a large subunit; disulfide-linked. Requires Ca(2+) as cofactor. As to expression, expressed by the venom gland.

The protein localises to the secreted. It carries out the reaction a 1,2-diacyl-sn-glycero-3-phosphocholine + H2O = a 1-acyl-sn-glycero-3-phosphocholine + a fatty acid + H(+). In terms of biological role, scorpion venom phospholipase A2 (PLA2) that is lethal to crickets and crustaceae. Causes inflammation in mice and lysis of human erythrocytes. Has a mild anticoagulant effect on human platelets. PLA2 catalyzes the calcium-dependent hydrolysis of the 2-acyl groups in 3-sn-phosphoglycerides. The polypeptide is Phospholipase A2 phaiodactylipin (Anuroctonus phaiodactylus (Mafia scorpion)).